The chain runs to 227 residues: Germin-like protein 3-3 (227 aa).

Positions 1 to 26 (MECFKTTLAGVVLVVLLLQQAPVLRA) are cleaved as a signal peptide. Cys-36 and Cys-51 form a disulfide bridge. Residues 65–217 (SRLATGGDVN…ALRVDAGVVE (153 aa)) form the Cupin type-1 domain. N-linked (GlcNAc...) asparagine glycosylation is found at Asn-78 and Asn-81. The Mn(2+) site is built by His-114, His-116, Glu-121, and His-163.

This sequence belongs to the germin family. In terms of assembly, oligomer (believed to be a pentamer but probably hexamer).

The protein localises to the secreted. The protein resides in the extracellular space. It is found in the apoplast. Its function is as follows. May play a role in plant defense. Probably has no oxalate oxidase activity even if the active site is conserved. This Oryza sativa subsp. japonica (Rice) protein is Germin-like protein 3-3.